Here is a 574-residue protein sequence, read N- to C-terminus: Membrane protein insertase YidC (574 aa).

6 consecutive transmembrane segments (helical) span residues 6 to 26, 356 to 376, 380 to 400, 447 to 467, 489 to 509, and 525 to 545; these read VFLIFAWLMVAALLWMEWGKD, FSIMAIIGQGLFWVLSHLHSF, WGWAIIGLVVLLRLALYPLSA, GGCLPLLIQMPIFFALYWVLV, PYFILPLLNISIMWATQKLTP, and PLVFGVMMAFMPAGLVLYWVV.

It belongs to the OXA1/ALB3/YidC family. Type 1 subfamily. In terms of assembly, interacts with the Sec translocase complex via SecD. Specifically interacts with transmembrane segments of nascent integral membrane proteins during membrane integration.

The protein localises to the cell inner membrane. In terms of biological role, required for the insertion and/or proper folding and/or complex formation of integral membrane proteins into the membrane. Involved in integration of membrane proteins that insert both dependently and independently of the Sec translocase complex, as well as at least some lipoproteins. Aids folding of multispanning membrane proteins. This chain is Membrane protein insertase YidC, found in Xanthomonas axonopodis pv. citri (strain 306).